Here is a 490-residue protein sequence, read N- to C-terminus: NAD/NADP-dependent betaine aldehyde dehydrogenase (490 aa).

Residues Thr-26, Ile-27, and Asp-93 each coordinate K(+). Residue 150 to 153 (GAWN) coordinates NADPH. The active-site Charge relay system is Lys-162. 176–179 (KPSE) contributes to the NADPH binding site. K(+) is bound at residue Val-180. Residues Gly-209 and 230-233 (GTST) contribute to the NADPH site. Residue Leu-246 participates in K(+) binding. Residue Glu-252 is the Proton acceptor of the active site. NADPH contacts are provided by Cys-286 and Glu-387. Residue Cys-286 is the Nucleophile of the active site. A Cysteine sulfenic acid (-SOH) modification is found at Cys-286. K(+) contacts are provided by Lys-457 and Gly-460. Residue Glu-464 is the Charge relay system of the active site.

The protein belongs to the aldehyde dehydrogenase family. Dimer of dimers. It depends on K(+) as a cofactor.

The enzyme catalyses betaine aldehyde + NAD(+) + H2O = glycine betaine + NADH + 2 H(+). It carries out the reaction betaine aldehyde + NADP(+) + H2O = glycine betaine + NADPH + 2 H(+). Its pathway is amine and polyamine biosynthesis; betaine biosynthesis via choline pathway; betaine from betaine aldehyde: step 1/1. Its function is as follows. Involved in the biosynthesis of the osmoprotectant glycine betaine. Catalyzes the irreversible oxidation of betaine aldehyde to the corresponding acid. In P.aeruginosa this reaction is a compulsory step in the assimilation of carbon and nitrogen when bacteria are growing in choline or choline precursors. Can use NADP(+) with similar efficiency to NAD(+), a property that can be used by the bacterium to produce the NADPH needed to combat the oxidative stress imposed by the host defenses. The sequence is that of NAD/NADP-dependent betaine aldehyde dehydrogenase from Pseudomonas aeruginosa (strain ATCC 15692 / DSM 22644 / CIP 104116 / JCM 14847 / LMG 12228 / 1C / PRS 101 / PAO1).